A 175-amino-acid chain; its full sequence is Peptide deformylase (175 aa).

Cys-99 and His-141 together coordinate Fe cation. Glu-142 is a catalytic residue. Fe cation is bound at residue His-145.

It belongs to the polypeptide deformylase family. Fe(2+) serves as cofactor.

It catalyses the reaction N-terminal N-formyl-L-methionyl-[peptide] + H2O = N-terminal L-methionyl-[peptide] + formate. Its function is as follows. Removes the formyl group from the N-terminal Met of newly synthesized proteins. Requires at least a dipeptide for an efficient rate of reaction. N-terminal L-methionine is a prerequisite for activity but the enzyme has broad specificity at other positions. The sequence is that of Peptide deformylase from Rickettsia canadensis (strain McKiel).